The primary structure comprises 361 residues: 3-dehydroquinate synthase (361 aa).

NAD(+) is bound by residues 70–75 (DGEQHK), 104–108 (GVVGD), 128–129 (TT), K141, and K150. 3 residues coordinate Zn(2+): E183, H246, and H263.

The protein belongs to the sugar phosphate cyclases superfamily. Dehydroquinate synthase family. Requires Co(2+) as cofactor. It depends on Zn(2+) as a cofactor. NAD(+) serves as cofactor.

The protein resides in the cytoplasm. It carries out the reaction 7-phospho-2-dehydro-3-deoxy-D-arabino-heptonate = 3-dehydroquinate + phosphate. Its pathway is metabolic intermediate biosynthesis; chorismate biosynthesis; chorismate from D-erythrose 4-phosphate and phosphoenolpyruvate: step 2/7. Its function is as follows. Catalyzes the conversion of 3-deoxy-D-arabino-heptulosonate 7-phosphate (DAHP) to dehydroquinate (DHQ). The sequence is that of 3-dehydroquinate synthase from Teredinibacter turnerae (strain ATCC 39867 / T7901).